The sequence spans 68 residues: Non-specific lipid-transfer protein 2 (68 aa).

This sequence belongs to the plant LTP family.

Its function is as follows. Plant non-specific lipid-transfer proteins transfer phospholipids as well as galactolipids across membranes. May play a role in wax or cutin deposition in the cell walls of expanding epidermal cells and certain secretory tissues. The protein is Non-specific lipid-transfer protein 2 of Prunus armeniaca (Apricot).